A 642-amino-acid chain; its full sequence is Threonine--tRNA ligase (642 aa).

One can recognise a TGS domain in the interval 1-61; that stretch reads MPVITLPDGS…ETDVDLAIIT (61 aa). The segment at 243–534 is catalytic; sequence DHRKIGKQLD…LIEEYAGKFP (292 aa). Residues Cys334, His385, and His511 each contribute to the Zn(2+) site.

Belongs to the class-II aminoacyl-tRNA synthetase family. In terms of assembly, homodimer. Zn(2+) serves as cofactor.

The protein resides in the cytoplasm. It catalyses the reaction tRNA(Thr) + L-threonine + ATP = L-threonyl-tRNA(Thr) + AMP + diphosphate + H(+). In terms of biological role, catalyzes the attachment of threonine to tRNA(Thr) in a two-step reaction: L-threonine is first activated by ATP to form Thr-AMP and then transferred to the acceptor end of tRNA(Thr). Also edits incorrectly charged L-seryl-tRNA(Thr). The sequence is that of Threonine--tRNA ligase from Shewanella loihica (strain ATCC BAA-1088 / PV-4).